We begin with the raw amino-acid sequence, 214 residues long: Adenylate kinase (214 aa).

10 to 15 (GAGKGT) is an ATP binding site. Residues 30-59 (STGDMLRAAVKAGTPLGLEAKKVMDAGQLV) form an NMP region. Residues Thr-31, Arg-36, 57 to 59 (QLV), 85 to 88 (GFPR), and Gln-92 each bind AMP. Residues 122-159 (GRRVHPGSGRVYHVVFNPPKVEGKDDVTGEDLAIRPDD) form an LID region. Residues Arg-123 and 132-133 (VY) each bind ATP. Positions 156 and 167 each coordinate AMP. Gln-200 contributes to the ATP binding site.

The protein belongs to the adenylate kinase family. Monomer.

Its subcellular location is the cytoplasm. The enzyme catalyses AMP + ATP = 2 ADP. It participates in purine metabolism; AMP biosynthesis via salvage pathway; AMP from ADP: step 1/1. Catalyzes the reversible transfer of the terminal phosphate group between ATP and AMP. Plays an important role in cellular energy homeostasis and in adenine nucleotide metabolism. The chain is Adenylate kinase from Shewanella putrefaciens (strain CN-32 / ATCC BAA-453).